The chain runs to 156 residues: Small ribosomal subunit protein uS7 (156 aa).

The protein belongs to the universal ribosomal protein uS7 family. In terms of assembly, part of the 30S ribosomal subunit. Contacts proteins S9 and S11.

Its function is as follows. One of the primary rRNA binding proteins, it binds directly to 16S rRNA where it nucleates assembly of the head domain of the 30S subunit. Is located at the subunit interface close to the decoding center, probably blocks exit of the E-site tRNA. This chain is Small ribosomal subunit protein uS7, found in Methylococcus capsulatus (strain ATCC 33009 / NCIMB 11132 / Bath).